Here is a 253-residue protein sequence, read N- to C-terminus: PAXIP1-associated glutamate-rich protein 1 (253 aa).

Disordered regions lie at residues 1-109 and 128-253; these read MSLV…MPPP and QAEI…QRKY. The segment covering 51–62 has biased composition (basic and acidic residues); sequence EGGREEAEHEGS. The segment at 116–160 is sufficient for interaction with NCOA1; that stretch reads YELLAAHGTLELQAEILPRRPPTPEAQSEEERSDEEPEAKEEEEE. Residue Thr-138 is modified to Phosphothreonine. A compositionally biased stretch (acidic residues) spans 142-159; it reads QSEEERSDEEPEAKEEEE. Phosphoserine occurs at positions 143 and 148. Residues 161–253 are sufficient for interaction with ESR1; that stretch reads KPHMPTEFDF…GSLFPRQRKY (93 aa). Residues 195-223 show a composition bias toward basic and acidic residues; the sequence is QKREARLDKVLSDMKRHKKLEEQILRTGR. The residue at position 237 (Ser-237) is a Phosphoserine.

As to quaternary structure, component of the KMT2 family MLL2/MLL3 complex, at least composed of the histone methyltransferases KMT2D and/or KMT2C, the common complex subunits ASH2L, RBBP5, WDR5 and DPY30, and the complex type-specific subunits PAXIP1/PTIP, PAGR1, NCOA6 and KDM6A; PAXIP1 is required for the association with the MLL2/MLL3 complex. Forms a constitutive complex with PAXIP1/PTIP independently of the MLL2/MLL3 complex. Interacts with NCOA1, ESR1, NR3C1, AR.

It is found in the nucleus. Functionally, its association with the histone methyltransferase MLL2/MLL3 complex is suggesting a role in epigenetic transcriptional activation. However, in association with PAXIP1/PTIP is proposed to function at least in part independently of the MLL2/MLL3 complex. Proposed to be recruited by PAXIP1 to sites of DNA damage where the PAGR1:PAXIP1 complex is required for cell survival in response to DNA damage independently of the MLL2/MLL3 complex. However, its function in DNA damage has been questioned. During immunoglobulin class switching in activated B-cells is involved in transcription regulation of downstream switch regions at the immunoglobulin heavy-chain (Igh) locus independently of the MLL2/MLL3 complex. Involved in both estrogen receptor-regulated gene transcription and estrogen-stimulated G1/S cell-cycle transition. Acts as a transcriptional cofactor for nuclear hormone receptors. Inhibits the induction properties of several steroid receptors such as NR3C1, AR and PPARG; the mechanism of inhibition appears to be gene-dependent. This chain is PAXIP1-associated glutamate-rich protein 1 (PAGR1), found in Bos taurus (Bovine).